Reading from the N-terminus, the 291-residue chain is uncharacterized protein (291 aa).

4 consecutive transmembrane segments (helical) span residues 13 to 33 (IILI…SITI), 84 to 104 (IVLF…IGII), 111 to 131 (LLHL…FIII), and 219 to 239 (LIYC…IYYL).

The protein localises to the cell membrane. This is an uncharacterized protein from Ureaplasma parvum serovar 3 (strain ATCC 700970).